A 426-amino-acid polypeptide reads, in one-letter code: Serine hydroxymethyltransferase (426 aa).

Residues Leu-113 and 117 to 119 each bind (6S)-5,6,7,8-tetrahydrofolate; that span reads GHL. N6-(pyridoxal phosphate)lysine is present on Lys-222. 363-365 contributes to the (6S)-5,6,7,8-tetrahydrofolate binding site; sequence SAF.

This sequence belongs to the SHMT family. In terms of assembly, homodimer. Pyridoxal 5'-phosphate serves as cofactor.

It is found in the cytoplasm. The enzyme catalyses (6R)-5,10-methylene-5,6,7,8-tetrahydrofolate + glycine + H2O = (6S)-5,6,7,8-tetrahydrofolate + L-serine. The protein operates within one-carbon metabolism; tetrahydrofolate interconversion. It functions in the pathway amino-acid biosynthesis; glycine biosynthesis; glycine from L-serine: step 1/1. Its function is as follows. Catalyzes the reversible interconversion of serine and glycine with tetrahydrofolate (THF) serving as the one-carbon carrier. This reaction serves as the major source of one-carbon groups required for the biosynthesis of purines, thymidylate, methionine, and other important biomolecules. Also exhibits THF-independent aldolase activity toward beta-hydroxyamino acids, producing glycine and aldehydes, via a retro-aldol mechanism. The sequence is that of Serine hydroxymethyltransferase from Phocaeicola vulgatus (strain ATCC 8482 / DSM 1447 / JCM 5826 / CCUG 4940 / NBRC 14291 / NCTC 11154) (Bacteroides vulgatus).